The following is a 241-amino-acid chain: Ribonuclease PH (241 aa).

Residues Arg-89 and 127 to 129 (GTR) contribute to the phosphate site.

This sequence belongs to the RNase PH family. As to quaternary structure, homohexameric ring arranged as a trimer of dimers.

The enzyme catalyses tRNA(n+1) + phosphate = tRNA(n) + a ribonucleoside 5'-diphosphate. In terms of biological role, phosphorolytic 3'-5' exoribonuclease that plays an important role in tRNA 3'-end maturation. Removes nucleotide residues following the 3'-CCA terminus of tRNAs; can also add nucleotides to the ends of RNA molecules by using nucleoside diphosphates as substrates, but this may not be physiologically important. Probably plays a role in initiation of 16S rRNA degradation (leading to ribosome degradation) during starvation. This Stenotrophomonas maltophilia (strain K279a) protein is Ribonuclease PH.